Here is a 563-residue protein sequence, read N- to C-terminus: GTPase Obg (563 aa).

Residues 2 to 168 (SDFVDRVTVH…RDVILELKSI (167 aa)) form the Obg domain. An OBG-type G domain is found at 169–349 (ADVALVGFPS…LNFALSALVH (181 aa)). Residues 175–182 (GFPSAGKS), 200–204 (FTTLV), 221–224 (DVPG), 301–304 (NKID), and 330–332 (STA) each bind GTP. S182 and T202 together coordinate Mg(2+). The OCT domain maps to 383-469 (DEGGSALEFT…ARMVEFDWDP (87 aa)). Disordered stretches follow at residues 478-509 (LDGS…ERRA) and 528-563 (ERKA…ETEE). Positions 486–509 (RGKDLRLEEQDPRTHRRSNAERRA) are enriched in basic and acidic residues.

It belongs to the TRAFAC class OBG-HflX-like GTPase superfamily. OBG GTPase family. In terms of assembly, monomer. The cofactor is Mg(2+).

It is found in the cytoplasm. Its function is as follows. An essential GTPase which binds GTP, GDP and possibly (p)ppGpp with moderate affinity, with high nucleotide exchange rates and a fairly low GTP hydrolysis rate. Plays a role in control of the cell cycle, stress response, ribosome biogenesis and in those bacteria that undergo differentiation, in morphogenesis control. This is GTPase Obg from Bifidobacterium longum subsp. infantis (strain ATCC 15697 / DSM 20088 / JCM 1222 / NCTC 11817 / S12).